The primary structure comprises 198 residues: HTH-type transcriptional regulator BetI (198 aa).

The HTH tetR-type domain maps to 8-68; the sequence is KIRRPQLVSA…ETMRDILRQL (61 aa). A DNA-binding region (H-T-H motif) is located at residues 31 to 50; the sequence is SVSLISQEAGVSSGIINHYF.

The protein operates within amine and polyamine biosynthesis; betaine biosynthesis via choline pathway [regulation]. Functionally, repressor involved in the biosynthesis of the osmoprotectant glycine betaine. It represses transcription of the choline transporter BetT and the genes of BetAB involved in the synthesis of glycine betaine. This Vibrio vulnificus (strain YJ016) protein is HTH-type transcriptional regulator BetI.